We begin with the raw amino-acid sequence, 1010 residues long: Polyhomeotic-like protein 1 (1010 aa).

Over residues Met-1–Ser-22 the composition is skewed to low complexity. Disordered stretches follow at residues Met-1–Gln-25, Asn-212–Thr-243, Gly-259–Val-312, Gln-444–Pro-506, Gly-565–Leu-588, and Lys-646–Val-678. Residues Asn-212–Lys-228 show a composition bias toward polar residues. Positions Met-279–Gly-292 are enriched in gly residues. The span at Pro-453–Gln-463 shows a compositional bias: pro residues. Low complexity predominate over residues Val-464–Pro-480. A compositionally biased stretch (pro residues) spans Thr-488 to Pro-500. The segment covering Ala-575–Ala-587 has biased composition (low complexity). A Phosphoserine modification is found at Ser-651. Lys-769 participates in a covalent cross-link: Glycyl lysine isopeptide (Lys-Gly) (interchain with G-Cter in SUMO2). The interval Gln-772–Ser-794 is disordered. Residues Leu-797 to Lys-831 form an FCS-type zinc finger. Positions 806, 809, 825, and 829 each coordinate Zn(2+). The tract at residues Ala-854–Thr-928 is disordered. A Phosphoserine modification is found at Ser-904. Thr-928 carries the post-translational modification Phosphothreonine. The region spanning Trp-946–Thr-1010 is the SAM domain.

Homodimer. Component of a PRC1-like complex. Interacts with the SAM domain of SCMH1 via its SAM domain in vitro. Interacts with RNF2 and CBX7. Interacts with PHC2. Interacts with BMI1. Highly expressed in testis with lower levels in most other tissues. Expressed in embryonic stem cells.

It localises to the nucleus. In terms of biological role, component of a Polycomb group (PcG) multiprotein PRC1-like complex, a complex class required to maintain the transcriptionally repressive state of many genes, including Hox genes, throughout development. PcG PRC1 complex acts via chromatin remodeling and modification of histones; it mediates monoubiquitination of histone H2A 'Lys-119', rendering chromatin heritably changed in its expressibility. Required for proper control of cellular levels of GMNN expression. This Mus musculus (Mouse) protein is Polyhomeotic-like protein 1.